The sequence spans 306 residues: tRNA (guanine-N(7)-)-methyltransferase (306 aa).

A compositionally biased stretch (polar residues) spans 1 to 19; that stretch reads MSSTAPLDSKATEQITTAA. Positions 1-65 are disordered; sequence MSSTAPLDSK…EASPELPSDE (65 aa). S-adenosyl-L-methionine contacts are provided by residues Gly-121, 144-145, 180-181, and Cys-200; these read EI and NA. The active site involves Asp-203. An S-adenosyl-L-methionine-binding site is contributed by 278-280; that stretch reads TEE.

Belongs to the class I-like SAM-binding methyltransferase superfamily. TrmB family. In terms of assembly, forms a complex with TRM82.

It localises to the nucleus. The enzyme catalyses guanosine(46) in tRNA + S-adenosyl-L-methionine = N(7)-methylguanosine(46) in tRNA + S-adenosyl-L-homocysteine. The protein operates within tRNA modification; N(7)-methylguanine-tRNA biosynthesis. Catalyzes the formation of N(7)-methylguanine at position 46 (m7G46) in tRNA. The protein is tRNA (guanine-N(7)-)-methyltransferase of Lodderomyces elongisporus (strain ATCC 11503 / CBS 2605 / JCM 1781 / NBRC 1676 / NRRL YB-4239) (Yeast).